We begin with the raw amino-acid sequence, 1224 residues long: DNA-directed RNA polymerase subunit beta'' (1224 aa).

Residues Cys-223, Cys-297, Cys-304, and Cys-307 each contribute to the Zn(2+) site.

Belongs to the RNA polymerase beta' chain family. RpoC2 subfamily. In terms of assembly, in plastids the minimal PEP RNA polymerase catalytic core is composed of four subunits: alpha, beta, beta', and beta''. When a (nuclear-encoded) sigma factor is associated with the core the holoenzyme is formed, which can initiate transcription. It depends on Zn(2+) as a cofactor.

The protein localises to the plastid. Its subcellular location is the chloroplast. The enzyme catalyses RNA(n) + a ribonucleoside 5'-triphosphate = RNA(n+1) + diphosphate. In terms of biological role, DNA-dependent RNA polymerase catalyzes the transcription of DNA into RNA using the four ribonucleoside triphosphates as substrates. In Porphyra purpurea (Red seaweed), this protein is DNA-directed RNA polymerase subunit beta''.